The following is a 489-amino-acid chain: Inositol-pentakisphosphate 2-kinase (489 aa).

The short motif at 136–140 is the EXKPK motif element; the sequence is EIKPK.

Belongs to the IPK1 type 2 family. As to expression, in brain, it is expressed throughout the hippocampus (CA1, CA2, CA3 and dentate gyrus), inner layers of the cerebral cortex, and Purkinje cells of the cerebellum. In heart, it is expressed in cardiomyocytes but not in interstitial cells, blood vessels, or valves. Also expressed in testis.

Its subcellular location is the cytoplasm. It is found in the nucleus. It catalyses the reaction 1D-myo-inositol 1,3,4,5,6-pentakisphosphate + ATP = 1D-myo-inositol hexakisphosphate + ADP + H(+). Functionally, phosphorylates Ins(1,3,4,5,6)P5 at position 2 to form Ins(1,2,3,4,5,6)P6 (InsP6 or phytate). InsP6 is involved in many processes such as mRNA export, non-homologous end-joining, endocytosis, ion channel regulation. It also protects cells from TNF-alpha-induced apoptosis. In Mus musculus (Mouse), this protein is Inositol-pentakisphosphate 2-kinase (Ippk).